A 428-amino-acid polypeptide reads, in one-letter code: Glutamate-1-semialdehyde 2,1-aminomutase (428 aa).

N6-(pyridoxal phosphate)lysine is present on Lys-265.

This sequence belongs to the class-III pyridoxal-phosphate-dependent aminotransferase family. HemL subfamily. In terms of assembly, homodimer. Pyridoxal 5'-phosphate serves as cofactor.

The protein localises to the cytoplasm. It carries out the reaction (S)-4-amino-5-oxopentanoate = 5-aminolevulinate. It participates in porphyrin-containing compound metabolism; protoporphyrin-IX biosynthesis; 5-aminolevulinate from L-glutamyl-tRNA(Glu): step 2/2. In Proteus mirabilis (strain HI4320), this protein is Glutamate-1-semialdehyde 2,1-aminomutase.